The chain runs to 314 residues: Olfactory receptor 1E5 (314 aa).

The Extracellular segment spans residues 1 to 25; that stretch reads MMGQNQTSISDFLLLGLPIQPEQQN. N-linked (GlcNAc...) asparagine glycosylation is present at asparagine 5. The helical transmembrane segment at 26-49 threads the bilayer; sequence LCYALFLAMYLTTLLGNLLIIVLI. Residues 50-57 lie on the Cytoplasmic side of the membrane; sequence RLDSHLHT. The chain crosses the membrane as a helical span at residues 58-79; that stretch reads PMYLFLSNLSFSDLCFSSVTIP. The Extracellular segment spans residues 80–100; the sequence is KLLQNMQNQDPSIPYADCLTQ. A disulfide bond links cysteine 97 and cysteine 189. Residues 101–120 traverse the membrane as a helical segment; sequence MYFFLLFGDLESFLLVAMAY. At 121 to 139 the chain is on the cytoplasmic side; that stretch reads DRYVAICFPLHYTAIMSPM. A helical transmembrane segment spans residues 140 to 158; it reads LCLSLVALSWVLTTFHAML. At 159 to 196 the chain is on the extracellular side; the sequence is HTLLMARLCFCADNVIPHFFCDMSALLKLACSDTRVNE. A helical transmembrane segment spans residues 197–219; it reads WVIFIMGGLIVVIPFLLILGSYA. The Cytoplasmic portion of the chain corresponds to 220–236; sequence RIVSSILKVPSSKGICK. The helical transmembrane segment at 237–260 threads the bilayer; the sequence is AFSTCGSHLSVVSLFYGTIIGLYL. At 261 to 272 the chain is on the extracellular side; the sequence is CPSANSSTLKET. Residue asparagine 265 is glycosylated (N-linked (GlcNAc...) asparagine). The chain crosses the membrane as a helical span at residues 273–292; sequence VMAMMYTVVTPMLNPFIYSL. Residues 293–314 lie on the Cytoplasmic side of the membrane; the sequence is RNRDMKGALERVIXKRKNPFLL.

The protein belongs to the G-protein coupled receptor 1 family.

It localises to the cell membrane. Functionally, odorant receptor. The chain is Olfactory receptor 1E5 (OR1E5) from Pan troglodytes (Chimpanzee).